Reading from the N-terminus, the 201-residue chain is Large ribosomal subunit protein mL61 (201 aa).

The tract at residues Arg-87–Arg-118 is disordered. Polar residues predominate over residues Pro-94–Gly-106.

This sequence belongs to the mitochondrion-specific ribosomal protein mL61 family. As to quaternary structure, component of the mitochondrial large ribosomal subunit (mt-LSU). Mature N.crassa 74S mitochondrial ribosomes consist of a small (37S) and a large (54S) subunit. The 37S small subunit contains a 16S ribosomal RNA (16S mt-rRNA) and 32 different proteins. The 54S large subunit contains a 23S rRNA (23S mt-rRNA) and 42 different proteins.

The protein resides in the mitochondrion. Component of the mitochondrial ribosome (mitoribosome), a dedicated translation machinery responsible for the synthesis of mitochondrial genome-encoded proteins, including at least some of the essential transmembrane subunits of the mitochondrial respiratory chain. The mitoribosomes are attached to the mitochondrial inner membrane and translation products are cotranslationally integrated into the membrane. The chain is Large ribosomal subunit protein mL61 (mrp49) from Neurospora crassa (strain ATCC 24698 / 74-OR23-1A / CBS 708.71 / DSM 1257 / FGSC 987).